The chain runs to 734 residues: Adhesion G protein-coupled receptor E5 (734 aa).

The signal sequence occupies residues 1 to 26; the sequence is MGGPHGGPFLLFHVLCFLLTLSEVGS. At 27-449 the chain is on the extracellular side; the sequence is QNSKACALPC…VEDPKLALIT (423 aa). One can recognise an EGF-like 1 domain in the interval 28-70; sequence NSKACALPCPPNSSCVNGTACRCAPGFISFSGEIFTDPLESCD. Intrachain disulfides connect Cys32–Cys42, Cys36–Cys48, Cys50–Cys69, Cys75–Cys89, Cys83–Cys98, Cys100–Cys121, Cys127–Cys140, Cys134–Cys149, and Cys151–Cys170. 2 N-linked (GlcNAc...) asparagine glycosylation sites follow: Asn39 and Asn44. The 52-residue stretch at 71-122 folds into the EGF-like 2; calcium-binding domain; sequence DINECGPPSPVDCGSSADCQNTEGGYYCTCSPGYEPVSGAMIFRNESENTCR. 2 N-linked (GlcNAc...) asparagine glycosylation sites follow: Asn115 and Asn136. One can recognise an EGF-like 3; calcium-binding domain in the interval 123–171; the sequence is DVDECSSGQHQCHNSTVCFNTVGSYTCHCREGWEPKHGLKNKQKDTICK. Positions 265 to 441 constitute a GAIN-B domain; sequence TYRSLDNTEL…AILMAHYDVE (177 aa). Asn285, Asn327, Asn372, Asn403, and Asn418 each carry an N-linked (GlcNAc...) asparagine glycan. 2 cysteine pairs are disulfide-bonded: Cys393/Cys423 and Cys411/Cys425. Residues 393 to 441 are GPS; that stretch reads CAFWKKDSNGNGSWATTGCWKMGRGNGSITCQCSHLSSFAILMAHYDVE. Residues 450–470 form a helical membrane-spanning segment; the sequence is KVGLALSLACLLLCILTFLLV. The Cytoplasmic portion of the chain corresponds to 471 to 478; sequence RPIQGSRT. Residues 479–499 traverse the membrane as a helical segment; it reads TVHLHLCICLFVGSAIFLAGI. Residues 500-519 are Extracellular-facing; it reads ENEGGEVGTRCRLVAVLLHY. The chain crosses the membrane as a helical span at residues 520-540; that stretch reads CFLAAFCWMSLEGVELYFLVV. The Cytoplasmic segment spans residues 541 to 550; it reads RVFQGQGMRK. Residues 551–571 traverse the membrane as a helical segment; it reads LWLCLIGYGVPLIIVGISAGA. Residues 572–593 lie on the Extracellular side of the membrane; it reads YSKGYGREKFCWLNFEGGFLWS. Residues 594-614 form a helical membrane-spanning segment; that stretch reads FVGPVTFIVLGNAIIFVITVW. Topologically, residues 615-637 are cytoplasmic; it reads KLTQKFSEINPDIKKLKKARVLT. Residues 638-658 form a helical membrane-spanning segment; the sequence is ITAIAQLFVLGCTWVFGLLLF. At 659–662 the chain is on the extracellular side; that stretch reads NPES. Residues 663-683 traverse the membrane as a helical segment; it reads WVLSYIFSILNCLQGFFLFVL. Over 684-734 the chain is Cytoplasmic; it reads YCLLNKKVREEYRKWACMVAGNKYSEFATTTSGSGSSHNQTQALRPSESGM. The disordered stretch occupies residues 712–734; sequence TTTSGSGSSHNQTQALRPSESGM. Thr713 is modified (phosphothreonine). Ser715 is subject to Phosphoserine. Position 724 is a phosphothreonine (Thr724). Ser730 and Ser732 each carry phosphoserine.

The protein belongs to the G-protein coupled receptor 2 family. LN-TM7 subfamily. As to quaternary structure, forms a heterodimer, consisting of a large extracellular region (alpha subunit) non-covalently linked to a seven-transmembrane moiety (beta subunit). Interacts with complement decay-accelerating factor (DAF) and with chondroitin sulfate. Post-translationally, proteolytically cleaved into 2 subunits, an extracellular alpha subunit and a seven-transmembrane subunit.

The protein localises to the cell membrane. It is found in the secreted. The protein resides in the extracellular space. In terms of biological role, receptor potentially involved in both adhesion and signaling processes early after leukocyte activation. Plays an essential role in leukocyte migration. This chain is Adhesion G protein-coupled receptor E5, found in Bos taurus (Bovine).